A 609-amino-acid polypeptide reads, in one-letter code: Dynamin-like protein 2 (609 aa).

The interval 1–16 (MQINLLNDFIKAYENT) is inserts into assembly domain of DLP1, required for tetramerization. Residues 17 to 25 (YSVSFDDSF) are linker. The Dynamin-type G domain maps to 63-310 (NIAIIGQFSS…FVGIFDRLLN (248 aa)). The tract at residues 68 to 75 (GQFSSGKS) is G1 motif. 72 to 76 (SGKSS) contacts GDP. The segment at 93–95 (PVT) is G2 motif. The segment at 158-161 (DTPG) is G3 motif. The segment at 216–219 (NQKD) is G4 motif.

It belongs to the TRAFAC class dynamin-like GTPase superfamily. Dynamin/Fzo/YdjA family. As to quaternary structure, forms a 2:2 heterotetramer with DLP1. DLP2 forms a central back-to-back dimer flanked on each side by a DLP1 subunit. In the crystal structures the 2 DLP1 subunits are in very different conformations.

Its subcellular location is the cytoplasm. It is found in the cytosol. The enzyme catalyses GTP + H2O = GDP + phosphate + H(+). Its function is as follows. The heterotetrameric DLP1(2)-DLP2(2) complex tethers liposomes and may mediate their fusion. Initial binding is probably mediated by DLP1, while DLP2 couples DLP1 subunits and increases the effective reach of the complex up to 45 nm. The role of the nucleotide is unknown. This subunit alone very weakly binds to liposomes; GTP, GDP, GMPPCP and GMPPNP do not change heterotetramer binding. Tetramerization is required for GTPase activity, suggesting the GTPase domains (dynamin-type G) from DLP1 and DLP2 must dimerize to reconstitute the GTPase active site. The polypeptide is Dynamin-like protein 2 (Campylobacter jejuni subsp. jejuni serotype O:23/36 (strain 81-176)).